Reading from the N-terminus, the 394-residue chain is Chorismate synthase (394 aa).

Arg-48 is an NADP(+) binding site. Residues 52–90 form a disordered region; sequence QSMITTSRGEPDEVSIQSGLQDGYTTGTPIGMTIENKDA. The segment covering 66 to 79 has biased composition (polar residues); sequence SIQSGLQDGYTTGT. Residues 125 to 127, Gly-297, 312 to 316, and Arg-339 contribute to the FMN site; these read RSS and HAPTS.

It belongs to the chorismate synthase family. It depends on FMNH2 as a cofactor.

The enzyme catalyses 5-O-(1-carboxyvinyl)-3-phosphoshikimate = chorismate + phosphate. Its pathway is metabolic intermediate biosynthesis; chorismate biosynthesis; chorismate from D-erythrose 4-phosphate and phosphoenolpyruvate: step 7/7. Its function is as follows. Catalyzes the anti-1,4-elimination of the C-3 phosphate and the C-6 proR hydrogen from 5-enolpyruvylshikimate-3-phosphate (EPSP) to yield chorismate, which is the branch point compound that serves as the starting substrate for the three terminal pathways of aromatic amino acid biosynthesis. This reaction introduces a second double bond into the aromatic ring system. In Halobacterium salinarum (strain ATCC 700922 / JCM 11081 / NRC-1) (Halobacterium halobium), this protein is Chorismate synthase.